We begin with the raw amino-acid sequence, 314 residues long: 3'-5' exoribonuclease YhaM (314 aa).

In terms of domain architecture, HD spans 163–279 (HVVSMLDLAK…LHYIDNLDAK (117 aa)).

It belongs to the YhaM family.

Functionally, shows a 3'-5' exoribonuclease activity. This chain is 3'-5' exoribonuclease YhaM, found in Bacillus cereus (strain AH187).